Reading from the N-terminus, the 425-residue chain is Enolase (425 aa).

A (2R)-2-phosphoglycerate-binding site is contributed by Gln162. Catalysis depends on Glu204, which acts as the Proton donor. Asp241, Glu282, and Asp309 together coordinate Mg(2+). (2R)-2-phosphoglycerate is bound by residues Lys334, Arg363, Ser364, and Lys385. Lys334 (proton acceptor) is an active-site residue.

This sequence belongs to the enolase family. Mg(2+) is required as a cofactor.

It localises to the cytoplasm. Its subcellular location is the secreted. It is found in the cell surface. The catalysed reaction is (2R)-2-phosphoglycerate = phosphoenolpyruvate + H2O. The protein operates within carbohydrate degradation; glycolysis; pyruvate from D-glyceraldehyde 3-phosphate: step 4/5. In terms of biological role, catalyzes the reversible conversion of 2-phosphoglycerate (2-PG) into phosphoenolpyruvate (PEP). It is essential for the degradation of carbohydrates via glycolysis. In Corynebacterium glutamicum (strain R), this protein is Enolase.